The chain runs to 915 residues: Phototropin-2 (915 aa).

Residues 1–10 show a composition bias toward pro residues; the sequence is MERPRAPPSP. Disordered regions lie at residues 1 to 62 and 84 to 118; these read MERP…EFQD and DDGI…GAFP. 2 positions are modified to phosphoserine: Ser9 and Ser22. A compositionally biased stretch (polar residues) spans 27-43; that stretch reads NPSSGKETHGSTSSSSK. Basic and acidic residues predominate over residues 93–107; the sequence is SEVERSKNMSRRSSE. The region spanning 120-193 is the PAS 1 domain; sequence VSQELKTALS…AKIRDCVKNG (74 aa). Residue Ser121 is modified to Phosphoserine. Asn169 serves as a coordination point for FMN. Residue Cys170 is modified to S-4a-FMN cysteine. The FMN site is built by Arg171, Gln174, Arg187, Asn202, Asn212, Gln233, and Lys238. Residues 194–248 enclose the PAC 1 domain; it reads KSYCGRLLNYKKDGTPFWNLLTVTPIKDDQGNTIKFIGMQVEVSKYTEGVNDKAL. The disordered stretch occupies residues 281 to 344; it reads HRKSQVQESV…KSSNNRHEDL (64 aa). Composition is skewed to polar residues over residues 286 to 310 and 325 to 337; these read VQES…GRQT and RVST…LKSS. Ser364 is modified (phosphoserine). The 74-residue stretch at 376–449 folds into the PAS 2 domain; the sequence is QGIDLATTLE…QKIRDAIRDQ (74 aa). Asn425 contributes to the FMN binding site. Residue Cys426 is modified to S-4a-FMN cysteine. The FMN site is built by Arg427, Gln430, Arg443, Asn458, Asn468, Phe470, and Gln489. Positions 450-504 constitute a PAC 2 domain; the sequence is REITVQLINYTKSGKKFWNLFHLQPMRDQKGELQYFIGVQLDGSDHVEPLQNRLS. Positions 577–864 constitute a Protein kinase domain; sequence FKPIKPLGSG…ANEIKQHAFF (288 aa). ATP-binding positions include 583–591 and Lys606; that span reads LGSGDTGSV. Asp702 serves as the catalytic Proton acceptor. The segment at 720-774 is activation loop; it reads DFDLSFMTTCTPQLIIPAAPSKRRRSKSQPLPTFVAEPSTQSNSFVGTEEYIAPE.

It belongs to the protein kinase superfamily. AGC Ser/Thr protein kinase family. Homodimer. Interacts with PKS1, PKS2, RPT3 and PHOT1. Associates with CBC1 and CBC2. Binds to BHP. Requires FMN as cofactor. In terms of processing, autophosphorylated in response to blue light irradiation. 2 molecules of FMN bind covalently to cysteines after exposure to blue light and are reversed in the dark. In terms of tissue distribution, expressed in leaves, stems and flowers, and to a lower extent in roots. Present in guard cells (at protein level).

The protein resides in the cell membrane. The catalysed reaction is L-seryl-[protein] + ATP = O-phospho-L-seryl-[protein] + ADP + H(+). The enzyme catalyses L-threonyl-[protein] + ATP = O-phospho-L-threonyl-[protein] + ADP + H(+). Its activity is regulated as follows. Autophosphorylation is inhibited by staurosporine, but not by tyrphostin 9, sphingosine, GW5074 and BML-265. Its function is as follows. Protein kinase that acts as a blue light photoreceptor in a signal-transduction pathway for photo-induced movements. Triggers the phosphorylation of AHA1 and AHA2 C-terminal penultimate Thr in guard cells to activate them and induce stomatal opening in response to blue light (BL). Also phosphorylates BLUS1, a kinase involved in stomatal opening. Mediates calcium spiking of extra- and intracellular origins in response to blue light. Involved in hypocotyl phototropism. Contributes to the chloroplast accumulation in low blue light and mediates their translocation (avoidance response) at high fluence. Regulates stomata opening and photomorphogenesis response of leaf tissue. Not involved in hypocotyl elongation inhibition, anthocyanin accumulation or cotyledon opening. The protein is Phototropin-2 of Arabidopsis thaliana (Mouse-ear cress).